Consider the following 468-residue polypeptide: Hydroxymethylglutaryl-CoA lyase, mitochondrial (468 aa).

A Pyruvate carboxyltransferase domain is found at Val-168–Ile-435. Arg-176 contacts substrate. Residues Asp-177, His-368, and His-370 each coordinate a divalent metal cation. Cys-401 is an active-site residue. Asn-410 contacts a divalent metal cation.

The protein belongs to the HMG-CoA lyase family. As to quaternary structure, homodimer. It depends on a divalent metal cation as a cofactor.

The protein resides in the mitochondrion matrix. The catalysed reaction is (3S)-3-hydroxy-3-methylglutaryl-CoA = acetoacetate + acetyl-CoA. It functions in the pathway metabolic intermediate metabolism; (S)-3-hydroxy-3-methylglutaryl-CoA degradation; acetoacetate from (S)-3-hydroxy-3-methylglutaryl-CoA: step 1/1. Its function is as follows. Involved in the catabolism of branched amino acids such as leucine. This chain is Hydroxymethylglutaryl-CoA lyase, mitochondrial (HMGCL), found in Arabidopsis thaliana (Mouse-ear cress).